A 146-amino-acid chain; its full sequence is Phospholipase A2, membrane associated (146 aa).

The signal sequence occupies residues 1-21; that stretch reads MKVLLLLAASIMAFGSIQVQG. 7 cysteine pairs are disulfide-bonded: C47–C139, C49–C65, C64–C119, C70–C146, C71–C112, C80–C105, and C98–C110. Ca(2+)-binding residues include H48, G50, and G52. H68 is an active-site residue. A Ca(2+)-binding site is contributed by D69. D113 is a catalytic residue.

The protein belongs to the phospholipase A2 family. The cofactor is Ca(2+). In terms of tissue distribution, mainly in the Paneth cells adjacent to the stem population in the small intestines.

It is found in the secreted. The protein localises to the cell membrane. The protein resides in the mitochondrion outer membrane. It carries out the reaction a 1,2-diacyl-sn-glycero-3-phosphoethanolamine + H2O = a 1-acyl-sn-glycero-3-phosphoethanolamine + a fatty acid + H(+). The enzyme catalyses 1-hexadecanoyl-2-(9Z-octadecenoyl)-sn-glycero-3-phosphoethanolamine + H2O = 1-hexadecanoyl-sn-glycero-3-phosphoethanolamine + (9Z)-octadecenoate + H(+). The catalysed reaction is 1-hexadecanoyl-2-(9Z,12Z-octadecadienoyl)-sn-glycero-3-phosphoethanolamine + H2O = 1-hexadecanoyl-sn-glycero-3-phosphoethanolamine + (9Z,12Z)-octadecadienoate + H(+). It catalyses the reaction 1-hexadecanoyl-2-(5Z,8Z,11Z,14Z-eicosatetraenoyl)-sn-glycero-3-phosphoethanolamine + H2O = 1-hexadecanoyl-sn-glycero-3-phosphoethanolamine + (5Z,8Z,11Z,14Z)-eicosatetraenoate + H(+). It carries out the reaction N-hexadecanoyl-1,2-di-(9Z-octadecenoyl)-sn-glycero-3-phosphoethanolamine + H2O = N-hexadecanoyl-1-(9Z-octadecenoyl)-sn-glycero-3-phosphoethanolamine + (9Z)-octadecenoate + H(+). The enzyme catalyses 1,2-dihexadecanoyl-sn-glycero-3-phospho-(1'-sn-glycerol) + H2O = 1-hexadecanoyl-sn-glycero-3-phospho-(1'-sn-glycerol) + hexadecanoate + H(+). The catalysed reaction is 1-hexadecanoyl-2-(9Z-octadecenoyl)-sn-glycero-3-phosphoglycerol + H2O = 1-hexadecanoyl-sn-glycero-3-phosphoglycerol + (9Z)-octadecenoate + H(+). It catalyses the reaction 1-hexadecanoyl-2-(9Z-octadecenoyl)-sn-glycero-3-phospho-(1'-sn-glycerol) + H2O = 1-hexadecanoyl-sn-glycero-3-phospho-(1'-sn-glycerol) + (9Z)-octadecenoate + H(+). It carries out the reaction a 1,2-diacyl-sn-glycero-3-phosphocholine + H2O = a 1-acyl-sn-glycero-3-phosphocholine + a fatty acid + H(+). The enzyme catalyses 1,2-dihexadecanoyl-sn-glycero-3-phosphocholine + H2O = 1-hexadecanoyl-sn-glycero-3-phosphocholine + hexadecanoate + H(+). The catalysed reaction is 1-hexadecanoyl-2-(9Z-octadecenoyl)-sn-glycero-3-phosphocholine + H2O = 1-hexadecanoyl-sn-glycero-3-phosphocholine + (9Z)-octadecenoate + H(+). It catalyses the reaction 1-hexadecanoyl-2-(9Z,12Z-octadecadienoyl)-sn-glycero-3-phosphocholine + H2O = (9Z,12Z)-octadecadienoate + 1-hexadecanoyl-sn-glycero-3-phosphocholine + H(+). It carries out the reaction 1-hexadecanoyl-2-(4Z,7Z,10Z,13Z,16Z,19Z-docosahexaenoyl)-sn-glycero-3-phosphocholine + H2O = (4Z,7Z,10Z,13Z,16Z,19Z)-docosahexaenoate + 1-hexadecanoyl-sn-glycero-3-phosphocholine + H(+). Secretory calcium-dependent phospholipase A2 that primarily targets extracellular phospholipids with implications in host antimicrobial defense, inflammatory response and tissue regeneration. Hydrolyzes the ester bond of the fatty acyl group attached at sn-2 position of phospholipids (phospholipase A2 activity) with preference for phosphatidylethanolamines and phosphatidylglycerols over phosphatidylcholines. Contributes to lipid remodeling of cellular membranes and generation of lipid mediators involved in pathogen clearance. Displays bactericidal activity against Gram-positive bacteria by directly hydrolyzing phospholipids of the bacterial membrane. Upon sterile inflammation, targets membrane phospholipids of extracellular mitochondria released from activated platelets, generating free unsaturated fatty acids such as arachidonate that is used by neighboring leukocytes to synthesize inflammatory eicosanoids such as leukotrienes. Simultaneously, by compromising mitochondrial membrane integrity, promotes the release in circulation of potent damage-associated molecular pattern molecules that activate the innate immune response. Plays a stem cell regulator role in the intestinal crypt. Within intracellular compartment mediates Paneth cell differentiation and its stem cell supporting functions by inhibiting Wnt signaling pathway in intestinal stem cell (ICS). Secreted in the intestinal lumen upon inflammation, acts in an autocrine way and promotes prostaglandin E2 synthesis that stimulates Wnt signaling pathway in ICS cells and tissue regeneration. May play a role in the biosynthesis of N-acyl ethanolamines that regulate energy metabolism and inflammation. Hydrolyzes N-acyl phosphatidylethanolamines to N-acyl lysophosphatidylethanolamines, which are further cleaved by a lysophospholipase D to release N-acyl ethanolamines. Independent of its catalytic activity, acts as a ligand for integrins. Binds to and activates integrins ITGAV:ITGB3, ITGA4:ITGB1 and ITGA5:ITGB1. Binds to a site (site 2) which is distinct from the classical ligand-binding site (site 1) and induces integrin conformational changes and enhanced ligand binding to site 1. Induces cell proliferation in an integrin-dependent manner. The protein is Phospholipase A2, membrane associated (Pla2g2a) of Mus musculus (Mouse).